The primary structure comprises 61 residues: Small ribosomal subunit protein uS14 (61 aa).

Zn(2+) is bound by residues cysteine 24, cysteine 27, cysteine 40, and cysteine 43.

This sequence belongs to the universal ribosomal protein uS14 family. Zinc-binding uS14 subfamily. As to quaternary structure, part of the 30S ribosomal subunit. Contacts proteins S3 and S10. Zn(2+) serves as cofactor.

Binds 16S rRNA, required for the assembly of 30S particles and may also be responsible for determining the conformation of the 16S rRNA at the A site. The protein is Small ribosomal subunit protein uS14 of Acidothermus cellulolyticus (strain ATCC 43068 / DSM 8971 / 11B).